The following is a 512-amino-acid chain: Glutathione-binding protein GsiB (512 aa).

Residues 1–26 (MARAVHRSGLVALGIATALMASCAFA) form the signal peptide.

It belongs to the bacterial solute-binding protein 5 family. In terms of assembly, the complex is composed of two ATP-binding proteins (GsiA), two transmembrane proteins (GsiC and GsiD) and a solute-binding protein (GsiB).

It localises to the periplasm. Part of the ABC transporter complex GsiABCD involved in glutathione import. Binds glutathione. This chain is Glutathione-binding protein GsiB, found in Escherichia coli O6:K15:H31 (strain 536 / UPEC).